Here is a 165-residue protein sequence, read N- to C-terminus: uncharacterized protein (165 aa).

The segment at 1–36 (MTRLCLPRPEAREDPIPVPPRGLGAGEGSGSPVRPP) is disordered. Residues 135-155 (LLLLMGLGPLLRACGMPLTLL) traverse the membrane as a helical segment.

It is found in the membrane. This is an uncharacterized protein from Homo sapiens (Human).